The chain runs to 89 residues: MRLLLILLLLTPVILAGSLDEEPNNADGANAASFTADQEGRHKRSLDVVLKEDGCPKYCSSDSDCCIRDRCLYIPQTGKQECMYKGPFL.

Residues 1-21 (MRLLLILLLLTPVILAGSLDE) form the signal peptide. The tract at residues 22–42 (EPNNADGANAASFTADQEGRH) is disordered. The propeptide occupies 22–44 (EPNNADGANAASFTADQEGRHKR).

Contains 3 disulfide bonds. In terms of tissue distribution, expressed by the venom duct.

It is found in the secreted. In Terebra anilis (Auger snail), this protein is Teretoxin Tan6.8.